A 216-amino-acid polypeptide reads, in one-letter code: Pyridoxine/pyridoxamine 5'-phosphate oxidase (216 aa).

Substrate contacts are provided by residues 12 to 15 (RKSY) and K70. FMN is bound by residues 65 to 70 (RVVLVK), 80 to 81 (FT), R86, and K87. Substrate contacts are provided by Y127, R131, and S135. FMN is bound by residues 144–145 (QS) and W188. Substrate is bound at residue 194–196 (RLH). An FMN-binding site is contributed by R198.

It belongs to the pyridoxamine 5'-phosphate oxidase family. Homodimer. The cofactor is FMN.

The enzyme catalyses pyridoxamine 5'-phosphate + O2 + H2O = pyridoxal 5'-phosphate + H2O2 + NH4(+). It carries out the reaction pyridoxine 5'-phosphate + O2 = pyridoxal 5'-phosphate + H2O2. The protein operates within cofactor metabolism; pyridoxal 5'-phosphate salvage; pyridoxal 5'-phosphate from pyridoxamine 5'-phosphate: step 1/1. It functions in the pathway cofactor metabolism; pyridoxal 5'-phosphate salvage; pyridoxal 5'-phosphate from pyridoxine 5'-phosphate: step 1/1. Its function is as follows. Catalyzes the oxidation of either pyridoxine 5'-phosphate (PNP) or pyridoxamine 5'-phosphate (PMP) into pyridoxal 5'-phosphate (PLP). This chain is Pyridoxine/pyridoxamine 5'-phosphate oxidase, found in Polaromonas sp. (strain JS666 / ATCC BAA-500).